The sequence spans 689 residues: Transcription termination factor Rho (689 aa).

Polar residues predominate over residues 1-20; it reads MPRTPKNQNLEQNTQTQSLT. Disordered stretches follow at residues 1–90 and 151–213; these read MPRT…KQPV and AQAQ…NRNN. Positions 52-65 are enriched in basic residues; it reads PKRRGRKPNPKTKA. Composition is skewed to low complexity over residues 170 to 183 and 191 to 213; these read NAQQ…QNGE and NNQN…NRNN. The Rho RNA-BD domain maps to 287 to 362; it reads IIYTEGVLEV…RRIDRVNFEE (76 aa). Residues 405-410, 417-422, and R448 each bind ATP; these read GKGQRS and RTGKTV.

It belongs to the Rho family. As to quaternary structure, homohexamer. The homohexamer assembles into an open ring structure.

Facilitates transcription termination by a mechanism that involves Rho binding to the nascent RNA, activation of Rho's RNA-dependent ATPase activity, and release of the mRNA from the DNA template. In Fibrobacter succinogenes (strain ATCC 19169 / S85), this protein is Transcription termination factor Rho.